The chain runs to 327 residues: GTP 3',8-cyclase (327 aa).

Positions 8-232 (AFARKFYYLR…LQRSRSDGPA (225 aa)) constitute a Radical SAM core domain. Residue arginine 17 participates in GTP binding. The [4Fe-4S] cluster site is built by cysteine 24 and cysteine 28. Tyrosine 30 serves as a coordination point for S-adenosyl-L-methionine. A [4Fe-4S] cluster-binding site is contributed by cysteine 31. Arginine 66 is a GTP binding site. Glycine 70 is a binding site for S-adenosyl-L-methionine. Threonine 97 is a GTP binding site. Position 121 (serine 121) interacts with S-adenosyl-L-methionine. Residue lysine 158 participates in GTP binding. Residue methionine 192 participates in S-adenosyl-L-methionine binding. Residues cysteine 255 and cysteine 258 each contribute to the [4Fe-4S] cluster site. Position 260–262 (260–262 (RLR)) interacts with GTP. Cysteine 272 provides a ligand contact to [4Fe-4S] cluster.

This sequence belongs to the radical SAM superfamily. MoaA family. As to quaternary structure, monomer and homodimer. Requires [4Fe-4S] cluster as cofactor.

The enzyme catalyses GTP + AH2 + S-adenosyl-L-methionine = (8S)-3',8-cyclo-7,8-dihydroguanosine 5'-triphosphate + 5'-deoxyadenosine + L-methionine + A + H(+). Its pathway is cofactor biosynthesis; molybdopterin biosynthesis. Catalyzes the cyclization of GTP to (8S)-3',8-cyclo-7,8-dihydroguanosine 5'-triphosphate. The protein is GTP 3',8-cyclase of Photorhabdus laumondii subsp. laumondii (strain DSM 15139 / CIP 105565 / TT01) (Photorhabdus luminescens subsp. laumondii).